A 136-amino-acid chain; its full sequence is Large ribosomal subunit protein uL16 (136 aa).

This sequence belongs to the universal ribosomal protein uL16 family. In terms of assembly, part of the 50S ribosomal subunit.

In terms of biological role, binds 23S rRNA and is also seen to make contacts with the A and possibly P site tRNAs. This Pectobacterium atrosepticum (strain SCRI 1043 / ATCC BAA-672) (Erwinia carotovora subsp. atroseptica) protein is Large ribosomal subunit protein uL16.